A 235-amino-acid chain; its full sequence is TVP38/TMEM64 family inner membrane protein YdjZ (235 aa).

The Periplasmic segment spans residues 1-13 (MMMMQSRKIWYYR). The chain crosses the membrane as a helical span at residues 14 to 34 (ITLIILLFAMLLAWALLPGVH). Topologically, residues 35–64 (EFINRSVAAFAAVDQQGIERFIQSYGALAA) are cytoplasmic. The chain crosses the membrane as a helical span at residues 65–85 (VVSFLLMILQAIAAPLPAFLI). Topologically, residues 86 to 95 (TFANASLFGA) are periplasmic. Residues 90 to 199 (ASLFGAFWGG…IVYSWAGSML (110 aa)) are VTT domain. A helical membrane pass occupies residues 96–116 (FWGGLLSWTSSMAGAALCFFI). Over 117 to 176 (ARVMGREVVEKLTGKTVLDSMDGFFTRYGKHTILVCRLLPFVPFDPISYAAGLTSIRFRS) the chain is Cytoplasmic. Residues 177–197 (FFIATGLGQLPATIVYSWAGS) traverse the membrane as a helical segment. Residues 198–202 (MLTGG) lie on the Periplasmic side of the membrane. Residues 203 to 223 (TFWFVTGLFILFALTVVIFMA) traverse the membrane as a helical segment. The Cytoplasmic segment spans residues 224–235 (KKIWLERQKRNA).

Belongs to the TVP38/TMEM64 family.

It localises to the cell inner membrane. This Escherichia coli (strain K12) protein is TVP38/TMEM64 family inner membrane protein YdjZ (ydjZ).